The sequence spans 268 residues: Tropinone reductase homolog (268 aa).

21–45 (LVTGGTRGIGYAIVEELANFGAEVY) contacts NADP(+). S154 contacts substrate. Catalysis depends on Y167, which acts as the Proton acceptor.

This sequence belongs to the short-chain dehydrogenases/reductases (SDR) family.

In Datura stramonium (Jimsonweed), this protein is Tropinone reductase homolog.